The following is a 283-amino-acid chain: Bifunctional protein FolD (283 aa).

Residues 165 to 167 (GRS), Ser-190, and Ile-231 contribute to the NADP(+) site.

This sequence belongs to the tetrahydrofolate dehydrogenase/cyclohydrolase family. Homodimer.

It catalyses the reaction (6R)-5,10-methylene-5,6,7,8-tetrahydrofolate + NADP(+) = (6R)-5,10-methenyltetrahydrofolate + NADPH. The enzyme catalyses (6R)-5,10-methenyltetrahydrofolate + H2O = (6R)-10-formyltetrahydrofolate + H(+). Its pathway is one-carbon metabolism; tetrahydrofolate interconversion. Functionally, catalyzes the oxidation of 5,10-methylenetetrahydrofolate to 5,10-methenyltetrahydrofolate and then the hydrolysis of 5,10-methenyltetrahydrofolate to 10-formyltetrahydrofolate. The polypeptide is Bifunctional protein FolD (Herminiimonas arsenicoxydans).